The chain runs to 679 residues: Protein white (679 aa).

The interval 1-34 is disordered; it reads MGQEDQEVLIRGGKATSTSAESLNNNNEQPYEQS. A compositionally biased stretch (polar residues) spans 15-34; it reads ATSTSAESLNNNNEQPYEQS. The ABC transporter domain maps to 84–332; it reads NRVKGVFCNE…FSYIGATCPT (249 aa). 121 to 128 serves as a coordination point for ATP; that stretch reads GSSGAGKT. 5 consecutive transmembrane segments (helical) span residues 427–445, 457–477, 507–525, 534–555, and 568–586; these read LLQT…LGQQ, AIFL…ITVF, LPLF…YPLI, FFTA…GYLI, and VGPP…FLNS. N-linked (GlcNAc...) asparagine glycosylation is found at N628 and N643. The chain crosses the membrane as a helical span at residues 651–670; it reads FDFIGLALLIVGFRISAYIA.

This sequence belongs to the ABC transporter superfamily. ABCG family. Eye pigment precursor importer (TC 3.A.1.204) subfamily.

The protein resides in the membrane. Functionally, may be part of a membrane-spanning permease system necessary for the transport of pigment precursors into pigment cells responsible for eye color. This is Protein white (W) from Ceratitis capitata (Mediterranean fruit fly).